Here is a 514-residue protein sequence, read N- to C-terminus: Beta-secretase 2 (514 aa).

The N-terminal stretch at 1–20 (MGALLRALLLPLLAQWLLRA) is a signal peptide. Residues 21–62 (VPVLAPAPFTLPLQVAGAANHRASTVPGLGTPELPRADGLAL) constitute a propeptide that is removed on maturation. Residues 21-469 (VPVLAPAPFT…NEPILWIVSY (449 aa)) lie on the Extracellular side of the membrane. The Peptidase A1 domain occupies 88 to 425 (YYLEMLIGTP…DRAQRRVGFA (338 aa)). Residue D106 is part of the active site. N166 is a glycosylation site (N-linked (GlcNAc...) asparagine). Disulfide bonds link C229–C429, C288–C453, and C340–C389. The active site involves D299. N-linked (GlcNAc...) asparagine glycosylation occurs at N362. Residues 470 to 490 (ALMSVCGAILLVLILLLLFPL) form a helical membrane-spanning segment. Topologically, residues 491 to 514 (HCRHAPRDPEVVNDESSLVRHRWK) are cytoplasmic.

Belongs to the peptidase A1 family. In terms of assembly, monomer. Interacts with RTN3 and RTN4. In terms of processing, undergoes autoproteolytic cleavage. Glycosylated.

The protein resides in the cell membrane. Its subcellular location is the golgi apparatus. It localises to the endoplasmic reticulum. It is found in the endosome. The protein localises to the melanosome. It carries out the reaction Broad endopeptidase specificity. Cleaves Glu-Val-Asn-Leu-|-Asp-Ala-Glu-Phe in the Swedish variant of Alzheimer's amyloid precursor protein.. In terms of biological role, responsible for the proteolytic processing of the amyloid precursor protein (APP). Cleaves APP, between residues 690 and 691, leading to the generation and extracellular release of beta-cleaved soluble APP, and a corresponding cell-associated C-terminal fragment which is later released by gamma-secretase. It has also been shown that it can cleave APP between residues 671 and 672. Involved in the proteolytic shedding of PMEL at early stages of melanosome biogenesis. Cleaves PMEL within the M-beta fragment to release the amyloidogenic PMEL luminal fragment containing M-alpha and a small portion of M-beta N-terminus. This is a prerequisite step for subsequent processing and assembly of PMEL fibrils into amyloid sheets. Responsible also for the proteolytic processing of CLTRN in pancreatic beta cells. This Rattus norvegicus (Rat) protein is Beta-secretase 2 (Bace2).